A 353-amino-acid chain; its full sequence is Fe(3+) ions import ATP-binding protein FbpC (353 aa).

The ABC transporter domain occupies 9-239; it reads VTFENVTKKF…PASAFIADFM (231 aa). Position 41 to 48 (41 to 48) interacts with ATP; sequence GPSGCGKT.

The protein belongs to the ABC transporter superfamily. Fe(3+) ion importer (TC 3.A.1.10) family. As to quaternary structure, the complex is composed of two ATP-binding proteins (FbpC), two transmembrane proteins (FbpB) and a solute-binding protein (FbpA).

Its subcellular location is the cell inner membrane. The catalysed reaction is Fe(3+)(out) + ATP + H2O = Fe(3+)(in) + ADP + phosphate + H(+). Functionally, part of the ABC transporter complex FbpABC involved in Fe(3+) ions import. Responsible for energy coupling to the transport system. The sequence is that of Fe(3+) ions import ATP-binding protein FbpC from Brucella suis biovar 1 (strain 1330).